The primary structure comprises 389 residues: S-adenosylmethionine synthase (389 aa).

Residue H19 coordinates ATP. D21 is a Mg(2+) binding site. Residue E47 coordinates K(+). L-methionine-binding residues include E60 and Q103. The flexible loop stretch occupies residues 103–113; the sequence is QSGDIAQGVDR. Residues 168 to 170, 234 to 235, D243, 249 to 250, A266, and K270 contribute to the ATP site; these read DGK, RF, and RK. D243 contributes to the L-methionine binding site. Position 274 (K274) interacts with L-methionine.

This sequence belongs to the AdoMet synthase family. In terms of assembly, homotetramer; dimer of dimers. Mg(2+) serves as cofactor. K(+) is required as a cofactor.

Its subcellular location is the cytoplasm. The catalysed reaction is L-methionine + ATP + H2O = S-adenosyl-L-methionine + phosphate + diphosphate. It functions in the pathway amino-acid biosynthesis; S-adenosyl-L-methionine biosynthesis; S-adenosyl-L-methionine from L-methionine: step 1/1. Catalyzes the formation of S-adenosylmethionine (AdoMet) from methionine and ATP. The overall synthetic reaction is composed of two sequential steps, AdoMet formation and the subsequent tripolyphosphate hydrolysis which occurs prior to release of AdoMet from the enzyme. This Nitratidesulfovibrio vulgaris (strain DSM 19637 / Miyazaki F) (Desulfovibrio vulgaris) protein is S-adenosylmethionine synthase.